A 37-amino-acid chain; its full sequence is Omega/M-ectatotoxin-Et1a subunit A (37 aa).

Residues C12 and C34 are joined by a disulfide bond.

This sequence belongs to the ectatomin family. Ectatomin-Et subfamily. As to quaternary structure, heterodimer of an A and a B chain; disulfide-linked. As to expression, expressed by the venom gland.

The protein resides in the secreted. It is found in the target cell membrane. Algogenic for animals, human and insects. At high concentrations (0.5-1 uM), it acts as a pore-forming protein that forms nonselective cation channels both in cell and artificial membranes. It is weakly selective for cation over anions channel conductance is identical in both directions. At lower concentrations (1-10 nM), this heterodimer inhibits cardiac L-type calcium currents in isolated rat cardiac ventricular myocytes. This chain is Omega/M-ectatotoxin-Et1a subunit A, found in Ectatomma tuberculatum (Selva ant).